Here is a 224-residue protein sequence, read N- to C-terminus: Cerebellin-2 (224 aa).

The first 51 residues, 1-51 (MQAPGRGPLGLRLMMPGRRGALREPGGCGSCLGVALALLLLLLPACCPVRA), serve as a signal peptide directing secretion. N-linked (GlcNAc...) asparagine glycosylation is found at Asn-53 and Asn-110. In terms of domain architecture, C1q spans 88–224 (SGSAKVAFSA…TFSGFLVFPL (137 aa)).

Homohexamer; disulfide-linked homotrimers. The trimers are assembled via the globular C1q domains. The trimers associate via N-terminal cysteine residues to form disulfide-linked hexamers. May form homooligomers or heterooligomers with CBLN1 and CBLN3 prior to secretion. Once secreted, does not interact with other CBLN family members. Interacts with GRID2, and more weakly with GRID1. Interacts with NRXN1 and NRXN2 long and short isoforms produced by alternative promoter usage. Weakly interacts with NRXN3 short isoform and not at all with NRXN3 long isoform.

It localises to the secreted. Functionally, acts as a synaptic organizer in specific subsets of neurons in the brain. Essential for long-term maintenance but not establishment of excitatory synapses. Functions as part of a trans-synaptic complex by binding to postsynaptic GRID1 and presynaptic neurexins. This interaction helps regulate the activity of NMDA and AMPA receptors at hippocampal synapses without affecting synapse formation. NRXN1B-CBLN2-GRID1 complex transduce presynaptic signals into postsynaptic NMDAR response. NRXN3B-CBLN2-GRID1 complex transduce presynaptic signals into postsynaptic AMPAR response. The chain is Cerebellin-2 from Homo sapiens (Human).